Here is a 1453-residue protein sequence, read N- to C-terminus: Clustered mitochondria protein homolog (1453 aa).

Residues 78 to 101 are compositionally biased toward polar residues; it reads LSENGQENSPHNSDSGHETSSPDS. Positions 78–110 are disordered; the sequence is LSENGQENSPHNSDSGHETSSPDSPLTPIEEGA. Residues 439 to 690 enclose the Clu domain; it reads EDGIRAEDCT…RTFPPDVNYL (252 aa). Positions 979–1015 are disordered; sequence PLTPSNEEVSMPINSVKKSRSSKRRKQISSGGKENDD. Residues 995-1005 show a composition bias toward basic residues; that stretch reads KKSRSSKRRKQ. TPR repeat units lie at residues 1235–1268 and 1277–1310; these read AEID…HQIY and ALIY…YSKT.

This sequence belongs to the CLU family.

It localises to the cytoplasm. Functionally, mRNA-binding protein involved in proper cytoplasmic distribution of mitochondria. In Brugia malayi (Filarial nematode worm), this protein is Clustered mitochondria protein homolog.